The following is a 419-amino-acid chain: Cysteine desulfurase (419 aa).

Residues 69 to 70 (AT), Asn157, Gln185, and 205 to 207 (SAH) each bind pyridoxal 5'-phosphate. Lys208 carries the N6-(pyridoxal phosphate)lysine modification. Residue Thr245 coordinates pyridoxal 5'-phosphate. The active-site Cysteine persulfide intermediate is the Cys333. Residue Cys333 coordinates [2Fe-2S] cluster. The segment at 392–419 (TPIQDEVRDDNRASSNSLNRGSAASKES) is disordered. The span at 404-413 (ASSNSLNRGS) shows a compositional bias: polar residues.

Belongs to the class-V pyridoxal-phosphate-dependent aminotransferase family. NifS/IscS subfamily. Homodimer. Requires pyridoxal 5'-phosphate as cofactor.

It carries out the reaction (sulfur carrier)-H + L-cysteine = (sulfur carrier)-SH + L-alanine. In terms of biological role, catalyzes the removal of elemental sulfur atoms from cysteine to produce alanine. Seems to participate in the biosynthesis of the nitrogenase metalloclusters by providing the inorganic sulfur required for the Fe-S core formation. The polypeptide is Cysteine desulfurase (Frankia sp. (strain EuIK1)).